A 105-amino-acid polypeptide reads, in one-letter code: Nitrogen fixation nifHD1 region GlnB-like protein 1 (105 aa).

This sequence belongs to the P(II) protein family.

In terms of biological role, could be involved in the regulation of nitrogen fixation. The polypeptide is Nitrogen fixation nifHD1 region GlnB-like protein 1 (glnBA) (Methanosarcina barkeri).